Reading from the N-terminus, the 135-residue chain is Type 3 secretion system stator protein (135 aa).

This sequence belongs to the SctL stator family. In terms of assembly, the core secretion machinery of the T3SS is composed of approximately 20 different proteins, including cytoplasmic components, a base, an export apparatus and a needle. This subunit is part of the cytosolic complex.

The protein localises to the cytoplasm. In terms of biological role, component of the type III secretion system (T3SS), also called injectisome, which is used to inject bacterial effector proteins into eukaryotic host cells. Acts as a regulator of the HrcN/SctN ATPase activity. In Rhizobium fredii (Sinorhizobium fredii), this protein is Type 3 secretion system stator protein.